A 348-amino-acid chain; its full sequence is CCN family member 2 (348 aa).

An N-terminal signal peptide occupies residues 1–25 (MLASVAGPISLALVLLALCTRPAMG). The IGFBP N-terminal domain occupies 26 to 97 (QDCSAQCQCA…NRKIGVCTAK (72 aa)). Intrachain disulfides connect Cys-28/Cys-53, Cys-32/Cys-55, Cys-34/Cys-56, Cys-42/Cys-59, Cys-67/Cys-81, and Cys-73/Cys-94. Residues 100 to 166 (APCVFGGSVY…GKCCEEWVCD (67 aa)) enclose the VWFC domain. The 46-residue stretch at 197–242 (NCLVQTTEWSACSKTCGMGISTRVTNDNTFCRLEKQSRLCMVRPCE) folds into the TSP type-1 domain. Residues 246 to 348 (EENIKKGKKC…YYRKMYGDMA (103 aa)) form a heparin-binding region. 5 disulfides stabilise this stretch: Cys-255–Cys-292, Cys-272–Cys-306, Cys-283–Cys-322, Cys-286–Cys-324, and Cys-291–Cys-328. The CTCK domain maps to 255 to 329 (CIRTPKIAKP…KTCACHYNCP (75 aa)).

Belongs to the CCN family. Monomer. Interacts with TSKU. Testis, spleen, kidney, lung, heart, and brain (lowest level in testis and highest in lung).

The protein localises to the secreted. Its subcellular location is the extracellular space. It localises to the extracellular matrix. Functionally, major connective tissue mitoattractant secreted by vascular endothelial cells. Promotes proliferation and differentiation of chondrocytes. Is involved in the stimulation of osteoblast differentiation and has a critical role in osteogenesis. Mediates heparin- and divalent cation-dependent cell adhesion in many cell types including fibroblasts, myofibroblasts, endothelial and epithelial cells. Enhances fibroblast growth factor-induced DNA synthesis. In Mus musculus (Mouse), this protein is CCN family member 2.